The sequence spans 123 residues: Ribosome-binding factor A (123 aa).

Belongs to the RbfA family. As to quaternary structure, monomer. Binds 30S ribosomal subunits, but not 50S ribosomal subunits or 70S ribosomes.

The protein resides in the cytoplasm. In terms of biological role, one of several proteins that assist in the late maturation steps of the functional core of the 30S ribosomal subunit. Associates with free 30S ribosomal subunits (but not with 30S subunits that are part of 70S ribosomes or polysomes). Required for efficient processing of 16S rRNA. May interact with the 5'-terminal helix region of 16S rRNA. This Neisseria meningitidis serogroup A / serotype 4A (strain DSM 15465 / Z2491) protein is Ribosome-binding factor A.